Reading from the N-terminus, the 165-residue chain is Neurotrophin-3 (165 aa).

Residues 1 to 3 (IQS) form the signal peptide. Residues 4-119 (TSMDQGSLSE…VLTXTSXXXR (116 aa)) constitute a propeptide that is removed on maturation.

The protein belongs to the NGF-beta family.

It localises to the secreted. In terms of biological role, seems to promote the survival of visceral and proprioceptive sensory neurons. In Tropidophis haetianus (Haitian dwarf boa), this protein is Neurotrophin-3 (NTF3).